We begin with the raw amino-acid sequence, 798 residues long: Phenylalanine--tRNA ligase beta subunit (798 aa).

In terms of domain architecture, tRNA-binding spans 39-148; that stretch reads SKHLGGFVVG…VTLAVGASLL (110 aa). The B5 domain maps to 401–476; the sequence is DWQKSIVLRP…RINGYDNIPA (76 aa). Mg(2+) contacts are provided by Asp-454, Asp-460, Glu-463, and Glu-464. The region spanning 704 to 797 is the FDX-ACB domain; it reads SALQPLDRDF…VAKATGGELR (94 aa).

This sequence belongs to the phenylalanyl-tRNA synthetase beta subunit family. Type 1 subfamily. As to quaternary structure, tetramer of two alpha and two beta subunits. Requires Mg(2+) as cofactor.

The protein localises to the cytoplasm. It carries out the reaction tRNA(Phe) + L-phenylalanine + ATP = L-phenylalanyl-tRNA(Phe) + AMP + diphosphate + H(+). The polypeptide is Phenylalanine--tRNA ligase beta subunit (Paramagnetospirillum magneticum (strain ATCC 700264 / AMB-1) (Magnetospirillum magneticum)).